The following is a 492-amino-acid chain: MKTTSSQPRAIYYVVALQIWEYFSFYGMRALLILYLTNQLKYDDNHAYALFSAYCSLVYVTPILGGYLADKLLGNRMAVMLGALLMAIGHLVLGASETAPVFLYLSLAIIVCGYGLFKSNVSCLLGELYEPADPRRDGGFSLMYAAGNIGSIIAPIACGYVQEEYSWAMGFALAAIGMVAGLVIFLCGNRHFQHTAGVNRQALCARRFLLPNWGWLLVLLVTAPLLIAVLFWQEWSVYALIVATVIGLAVLARIYLRAETDKQRKDLRLIVVLTAFSLLFWAFAQQGGSSISLYIDRFVNRHIMSYEVPTAMFQSVNAFAVMLCGMVLAWLVKESVGGNRTVRIWGKFALGLGLMSAGFCILTLSARWSAAYGQSSMPLMVLGLAVMGFAELFIDPVAMSQITRIEIPGVTGVLTGIYMLLSGAIANYLAGVIADQTSQASFDAAGAVNYSIDAYIKVFSQITWGALACVGVVLVIWLYHSLKVRTRRLAVE.

A run of 13 helical transmembrane segments spans residues 14 to 34, 49 to 69, 91 to 111, 138 to 158, 167 to 187, 212 to 232, 236 to 256, 269 to 289, 312 to 332, 344 to 364, 379 to 399, 413 to 433, and 458 to 478; these read VVALQIWEYFSFYGMRALLIL, ALFSAYCSLVYVTPILGGYLA, LVLGASETAPVFLYLSLAIIV, GGFSLMYAAGNIGSIIAPIAC, WAMGFALAAIGMVAGLVIFLC, NWGWLLVLLVTAPLLIAVLFW, SVYALIVATVIGLAVLARIYL, LIVVLTAFSLLFWAFAQQGGS, MFQSVNAFAVMLCGMVLAWLV, IWGKFALGLGLMSAGFCILTL, LMVLGLAVMGFAELFIDPVAM, VLTGIYMLLSGAIANYLAGVI, and VFSQITWGALACVGVVLVIWL.

The protein belongs to the major facilitator superfamily. Proton-dependent oligopeptide transporter (POT/PTR) (TC 2.A.17) family. DtpD subfamily.

The protein resides in the cell inner membrane. Its function is as follows. Probable proton-dependent permease that transports dipeptides. This Klebsiella pneumoniae (strain 342) protein is Dipeptide permease D.